Reading from the N-terminus, the 469-residue chain is Cholesterol 7-desaturase nvd (469 aa).

The first 25 residues, 1–25 (MASFCASKFLPGLLMLGLGLAVALA), serve as a signal peptide directing secretion. A helical transmembrane segment spans residues 58–78 (NFVASQTLLTLTIFGVASFIL). Residues 132–238 (IPLVASQDLV…VIEQNGFVLV (107 aa)) form the Rieske domain. The [2Fe-2S] cluster site is built by Cys-172, His-174, Cys-192, and His-195.

The protein belongs to the cholesterol 7-desaturase family. The cofactor is [2Fe-2S] cluster.

It localises to the membrane. The enzyme catalyses cholesterol + NADPH + O2 + H(+) = 7-dehydrocholesterol + NADP(+) + 2 H2O. It catalyses the reaction cholesterol + NADH + O2 + H(+) = 7-dehydrocholesterol + NAD(+) + 2 H2O. Its pathway is steroid hormone biosynthesis; dafachronic acid biosynthesis. In terms of biological role, catalyzes the production of 7-dehydrocholesterol (7-DHC or cholesta-5,7-dien-3beta-ol) by inserting a double bond (desaturating) at the C7-C8 single bond of cholesterol. Essential regulator of steroid biosynthesis as this reaction is the first step in the synthesis of the steroid hormone Delta(7)-dafachronic acid. This chain is Cholesterol 7-desaturase nvd, found in Hemicentrotus pulcherrimus (Sea urchin).